The sequence spans 434 residues: Asparagine--tRNA ligase (434 aa).

Belongs to the class-II aminoacyl-tRNA synthetase family.

The protein resides in the cytoplasm. The enzyme catalyses tRNA(Asn) + L-asparagine + ATP = L-asparaginyl-tRNA(Asn) + AMP + diphosphate + H(+). This Pyrococcus horikoshii (strain ATCC 700860 / DSM 12428 / JCM 9974 / NBRC 100139 / OT-3) protein is Asparagine--tRNA ligase.